The primary structure comprises 44 residues: Pandinin-1 (44 aa).

In terms of tissue distribution, expressed by the venom gland.

The protein resides in the secreted. The protein localises to the target cell membrane. Functionally, disrupts cell membranes through formation of pores. Strong antimicrobial activity against Gram-positive bacteria B.subtilis, S.epidermidis, E.faecalis and S.aureus. Less active against Gram-negative bacteria P.aeruginosa and E.coli. Has no antifungal or hemolytic activity. This is Pandinin-1 from Pandinus imperator (Emperor scorpion).